Consider the following 152-residue polypeptide: 3-dehydroquinate dehydratase (152 aa).

The Proton acceptor role is filled by Tyr26. Asn78, His84, and Asp91 together coordinate substrate. His104 serves as the catalytic Proton donor. Residues Leu105–Ser106 and Arg115 each bind substrate.

It belongs to the type-II 3-dehydroquinase family. Homododecamer.

It catalyses the reaction 3-dehydroquinate = 3-dehydroshikimate + H2O. Its pathway is metabolic intermediate biosynthesis; chorismate biosynthesis; chorismate from D-erythrose 4-phosphate and phosphoenolpyruvate: step 3/7. Catalyzes a trans-dehydration via an enolate intermediate. In Idiomarina loihiensis (strain ATCC BAA-735 / DSM 15497 / L2-TR), this protein is 3-dehydroquinate dehydratase.